A 116-amino-acid chain; its full sequence is uncharacterized protein (116 aa).

The VOC domain maps to 5–113; that stretch reads EVKMVVLSTE…TGNGLVFYSP (109 aa). An Isoglutamyl lysine isopeptide (Lys-Gln) (interchain with Q-Cter in protein Pup) cross-link involves residue K76.

This is an uncharacterized protein from Mycolicibacterium smegmatis (strain ATCC 700084 / mc(2)155) (Mycobacterium smegmatis).